The chain runs to 238 residues: Uridylate kinase (238 aa).

Position 12-15 (12-15 (KLSG)) interacts with ATP. G54 provides a ligand contact to UMP. Positions 55 and 59 each coordinate ATP. UMP contacts are provided by residues D74 and 135–142 (TGNPFFTT). Positions 162, 168, and 171 each coordinate ATP.

This sequence belongs to the UMP kinase family. In terms of assembly, homohexamer.

It localises to the cytoplasm. It catalyses the reaction UMP + ATP = UDP + ADP. The protein operates within pyrimidine metabolism; CTP biosynthesis via de novo pathway; UDP from UMP (UMPK route): step 1/1. With respect to regulation, inhibited by UTP. In terms of biological role, catalyzes the reversible phosphorylation of UMP to UDP. The polypeptide is Uridylate kinase (Aromatoleum aromaticum (strain DSM 19018 / LMG 30748 / EbN1) (Azoarcus sp. (strain EbN1))).